We begin with the raw amino-acid sequence, 571 residues long: Acetolactate synthase large subunit (571 aa).

E51 provides a ligand contact to thiamine diphosphate. FAD contacts are provided by residues R153, 261–282, and 304–323; these read HGTY…IGVR and DIDP…IVGD. Residues 394-474 form a thiamine pyrophosphate binding region; the sequence is QHQMFTALYY…VLILNLNNSS (81 aa). Mg(2+) contacts are provided by D445 and N472.

Belongs to the TPP enzyme family. Dimer of large and small chains. Mg(2+) serves as cofactor. The cofactor is thiamine diphosphate.

The enzyme catalyses 2 pyruvate + H(+) = (2S)-2-acetolactate + CO2. Its pathway is amino-acid biosynthesis; L-isoleucine biosynthesis; L-isoleucine from 2-oxobutanoate: step 1/4. It functions in the pathway amino-acid biosynthesis; L-valine biosynthesis; L-valine from pyruvate: step 1/4. In Buchnera aphidicola subsp. Acyrthosiphon pisum (strain APS) (Acyrthosiphon pisum symbiotic bacterium), this protein is Acetolactate synthase large subunit (ilvI).